A 139-amino-acid chain; its full sequence is Trafficking protein particle complex subunit 2-like protein (139 aa).

It belongs to the TRAPP small subunits family. Sedlin subfamily.

The protein localises to the cytoplasm. It localises to the perinuclear region. Its subcellular location is the endoplasmic reticulum. It is found in the golgi apparatus. Functionally, may play a role in vesicular transport from endoplasmic reticulum to Golgi. In Xenopus tropicalis (Western clawed frog), this protein is Trafficking protein particle complex subunit 2-like protein (trappc2l).